Reading from the N-terminus, the 225-residue chain is 3-dehydroquinate dehydratase (225 aa).

Residues Ser-6, 30 to 32, and Arg-62 contribute to the 3-dehydroquinate site; that span reads EWR. Catalysis depends on His-118, which acts as the Proton donor/acceptor. Lys-143 serves as the catalytic Schiff-base intermediate with substrate. Positions 186, 205, and 209 each coordinate 3-dehydroquinate.

It belongs to the type-I 3-dehydroquinase family. As to quaternary structure, homodimer.

It catalyses the reaction 3-dehydroquinate = 3-dehydroshikimate + H2O. It participates in metabolic intermediate biosynthesis; chorismate biosynthesis; chorismate from D-erythrose 4-phosphate and phosphoenolpyruvate: step 3/7. Its function is as follows. Involved in the third step of the chorismate pathway, which leads to the biosynthesis of aromatic amino acids. Catalyzes the cis-dehydration of 3-dehydroquinate (DHQ) and introduces the first double bond of the aromatic ring to yield 3-dehydroshikimate. This is 3-dehydroquinate dehydratase from Streptococcus pneumoniae (strain ATCC 700669 / Spain 23F-1).